Consider the following 660-residue polypeptide: Bifunctional polymyxin resistance protein ArnA (660 aa).

Residues 1–304 (MKAVIFAYHD…TLGLVAGARL (304 aa)) form a formyltransferase ArnAFT region. Catalysis depends on His-104, which acts as the Proton donor; for formyltransferase activity. (6R)-10-formyltetrahydrofolate-binding positions include Arg-114 and 136–140 (VKRAD). The dehydrogenase ArnADH stretch occupies residues 314-660 (RRIRVLILGV…RSVDIAERAS (347 aa)). NAD(+)-binding positions include Asp-347 and 368-369 (DI). UDP-alpha-D-glucuronate-binding positions include Ala-393, Tyr-398, and 432–433 (TS). Glu-434 functions as the Proton acceptor; for decarboxylase activity in the catalytic mechanism. UDP-alpha-D-glucuronate contacts are provided by residues Arg-460, Asn-492, 526-535 (KLIDGGQQKR), and Tyr-613. The active-site Proton donor; for decarboxylase activity is the Arg-619.

In the N-terminal section; belongs to the Fmt family. UDP-L-Ara4N formyltransferase subfamily. The protein in the C-terminal section; belongs to the NAD(P)-dependent epimerase/dehydratase family. UDP-glucuronic acid decarboxylase subfamily. As to quaternary structure, homohexamer, formed by a dimer of trimers.

The enzyme catalyses UDP-alpha-D-glucuronate + NAD(+) = UDP-beta-L-threo-pentopyranos-4-ulose + CO2 + NADH. It carries out the reaction UDP-4-amino-4-deoxy-beta-L-arabinose + (6R)-10-formyltetrahydrofolate = UDP-4-deoxy-4-formamido-beta-L-arabinose + (6S)-5,6,7,8-tetrahydrofolate + H(+). The protein operates within nucleotide-sugar biosynthesis; UDP-4-deoxy-4-formamido-beta-L-arabinose biosynthesis; UDP-4-deoxy-4-formamido-beta-L-arabinose from UDP-alpha-D-glucuronate: step 1/3. Its pathway is nucleotide-sugar biosynthesis; UDP-4-deoxy-4-formamido-beta-L-arabinose biosynthesis; UDP-4-deoxy-4-formamido-beta-L-arabinose from UDP-alpha-D-glucuronate: step 3/3. It participates in bacterial outer membrane biogenesis; lipopolysaccharide biosynthesis. Functionally, bifunctional enzyme that catalyzes the oxidative decarboxylation of UDP-glucuronic acid (UDP-GlcUA) to UDP-4-keto-arabinose (UDP-Ara4O) and the addition of a formyl group to UDP-4-amino-4-deoxy-L-arabinose (UDP-L-Ara4N) to form UDP-L-4-formamido-arabinose (UDP-L-Ara4FN). The modified arabinose is attached to lipid A and is required for resistance to polymyxin and cationic antimicrobial peptides. This is Bifunctional polymyxin resistance protein ArnA from Salmonella schwarzengrund (strain CVM19633).